Here is a 485-residue protein sequence, read N- to C-terminus: MQWEVVIGLETHTQLSTASKIFSGTSTAFGAEPNTQASPVDLALPGVLPVLNKGAVERAIQFGLAIGATIAPRSIFARKNYFYPDLPKGYQISQYEIPVVQGGSITIQVEGKKGEVYEKTVQLTRAHLEEDAGKSLHEDFAGMTGIDLNRAGTPLLEIVTEPDMRSAAEAVAYAKALHSLVVWLGICDGNMQEGSFRCDANVSVRPVGQKEFGTRREIKNLNSFRFLQQAIEYEVQWQINEIEDGRKIQQATVLFDPDTGETRAMRTKEDAHDYRYFPDPDLMPLEIDAAWIERVRGELPELPAAMQARFVSQYGLSAYDASTLTASKAMASYYEAVVAEVGAANAKPAANWLMGDVASQLNREGISIDAAPVKPLQLARLLARIADGTVSNNTAKKDVFPAMWAGESNGDADAIIAAKGLKQMSDTGELEKIIDDVLAANAKSVEEFRAGKEKAFNALVGQAMKATKGKANPAQVNELLKKKLG.

Belongs to the GatB/GatE family. GatB subfamily. Heterotrimer of A, B and C subunits.

It carries out the reaction L-glutamyl-tRNA(Gln) + L-glutamine + ATP + H2O = L-glutaminyl-tRNA(Gln) + L-glutamate + ADP + phosphate + H(+). The catalysed reaction is L-aspartyl-tRNA(Asn) + L-glutamine + ATP + H2O = L-asparaginyl-tRNA(Asn) + L-glutamate + ADP + phosphate + 2 H(+). Its function is as follows. Allows the formation of correctly charged Asn-tRNA(Asn) or Gln-tRNA(Gln) through the transamidation of misacylated Asp-tRNA(Asn) or Glu-tRNA(Gln) in organisms which lack either or both of asparaginyl-tRNA or glutaminyl-tRNA synthetases. The reaction takes place in the presence of glutamine and ATP through an activated phospho-Asp-tRNA(Asn) or phospho-Glu-tRNA(Gln). This Cupriavidus pinatubonensis (strain JMP 134 / LMG 1197) (Cupriavidus necator (strain JMP 134)) protein is Aspartyl/glutamyl-tRNA(Asn/Gln) amidotransferase subunit B.